The following is a 32-amino-acid chain: Ranatuerin-3 (32 aa).

Residues Cys23 and Cys28 are joined by a disulfide bond.

The protein belongs to the frog skin active peptide (FSAP) family. Ranatuerin subfamily. In terms of tissue distribution, expressed by the skin glands.

The protein localises to the secreted. In terms of biological role, antibacterial activity against Gram-positive bacterium S.aureus (MIC=60 uM). Shows no detectable hemolytic activity towards human erythrocytes. This chain is Ranatuerin-3, found in Aquarana catesbeiana (American bullfrog).